The primary structure comprises 209 residues: Large ribosomal subunit protein uL3 (209 aa).

The disordered stretch occupies residues serine 127–alanine 151.

The protein belongs to the universal ribosomal protein uL3 family. In terms of assembly, part of the 50S ribosomal subunit. Forms a cluster with proteins L14 and L19.

Functionally, one of the primary rRNA binding proteins, it binds directly near the 3'-end of the 23S rRNA, where it nucleates assembly of the 50S subunit. The protein is Large ribosomal subunit protein uL3 of Borrelia duttonii (strain Ly).